A 404-amino-acid chain; its full sequence is MMDGTNFDDALTGEQKIRNFNINFGPQHPAAHGVLRLVLELDGEIVERCDPHIGLLHRGTEKLMESRTYLQNLPYFDRLDYVAPMNQEHAWCLAIEKLTGTVVPRRGSLIRVLYCEIGRILNHLLNITTQAMDVGALTPPLWGFEEREKLMVFYERACGARLHAAYFRPGGVHQDLPPDLLDDIEAWSHEFPSVMDDIDGLLTENRIFKQRNCDIGVVTEEEILEWGYSGVMVRGSGLAWDLRRAQPYECYDEFDFQIPVGKNGDCYDRYLVRMQEMRESLKIIQQAIVKLRETKGDVLARGKLTPPSRADMKTSMEALIHHFKLYTEGFHVPAGEVYAAVEAPKGEFGVFLKSDGTNRPYRAKIRAPGYLHLQSMDHVAKGHQLADVAAIIGTMDVVFGEIDR.

This sequence belongs to the complex I 49 kDa subunit family. NDH-1 is composed of 14 different subunits. Subunits NuoB, C, D, E, F, and G constitute the peripheral sector of the complex.

It is found in the cell inner membrane. It catalyses the reaction a quinone + NADH + 5 H(+)(in) = a quinol + NAD(+) + 4 H(+)(out). Its function is as follows. NDH-1 shuttles electrons from NADH, via FMN and iron-sulfur (Fe-S) centers, to quinones in the respiratory chain. The immediate electron acceptor for the enzyme in this species is believed to be ubiquinone. Couples the redox reaction to proton translocation (for every two electrons transferred, four hydrogen ions are translocated across the cytoplasmic membrane), and thus conserves the redox energy in a proton gradient. The protein is NADH-quinone oxidoreductase subunit D of Dinoroseobacter shibae (strain DSM 16493 / NCIMB 14021 / DFL 12).